The sequence spans 396 residues: Interleukin-3 receptor subunit alpha (396 aa).

Residues 1–16 (MAANLWLILGLLASHS) form the signal peptide. Residues 17 to 331 (SDLAAVREAP…VCPPEVMPVK (315 aa)) are Extracellular-facing. Intrachain disulfides connect Cys62–Cys79, Cys87–Cys223, Cys125–Cys134, Cys165–Cys187, and Cys245–Cys323. Asn91 carries an N-linked (GlcNAc...) asparagine glycan. N-linked (GlcNAc...) asparagine glycosylation is found at Asn213, Asn246, Asn272, and Asn283. The WSXWS motif motif lies at 312 to 316 (LSSWS). The chain crosses the membrane as a helical span at residues 332–355 (TALVTSVATVLGAGLVAAGLLLWW). Residues 356–396 (RKSLLYRLCPPIPRLRLPLAGEMVVWEPALEDCEVTPVTDA) lie on the Cytoplasmic side of the membrane. A Glycyl lysine isopeptide (Lys-Gly) (interchain with G-Cter in ubiquitin) cross-link involves residue Lys357. The Box 1 motif signature appears at 363–371 (LCPPIPRLR).

The protein belongs to the type I cytokine receptor family. Type 5 subfamily. In terms of assembly, interacts with IL3. Heterodimer of an alpha and a beta subunit. The beta subunit is common to the IL3, IL5 and GM-CSF receptors. In terms of processing, ubiquitinated at Lys-357 by RNFT2 in response to IL3. Ubiquitination leads ligand-induced degradation by the proteasome. Ubiquitinated by RNF128 via 'Lys-27'-linked polyubiquitination, facilitating its degradation through the lysosomal pathway.

The protein localises to the cell membrane. The protein resides in the endomembrane system. Cell surface receptor for IL3 expressed on hematopoietic progenitor cells, monocytes and B-lymphocytes that controls the production and differentiation of hematopoietic progenitor cells into lineage-restricted cells. Ligand stimulation rapidly induces hetrodimerization with IL3RB, phosphorylation and enzyme activity of effector proteins such as JAK2 and PI3K that play a role in signaling cell proliferation and differentiation. Activation of JAK2 leads to STAT5-mediated transcriptional program. This Mus musculus (Mouse) protein is Interleukin-3 receptor subunit alpha (Il3ra).